A 293-amino-acid chain; its full sequence is Cytidine deaminase (293 aa).

CMP/dCMP-type deaminase domains lie at 47 to 166 and 186 to 293; these read DDRA…FGPA and VSDD…YQAV. Residue 88-90 participates in substrate binding; it reads NME. H101 is a Zn(2+) binding site. The active-site Proton donor is the E103. Zn(2+)-binding residues include C128 and C131.

Belongs to the cytidine and deoxycytidylate deaminase family. In terms of assembly, homodimer. Zn(2+) serves as cofactor.

The enzyme catalyses cytidine + H2O + H(+) = uridine + NH4(+). The catalysed reaction is 2'-deoxycytidine + H2O + H(+) = 2'-deoxyuridine + NH4(+). In terms of biological role, this enzyme scavenges exogenous and endogenous cytidine and 2'-deoxycytidine for UMP synthesis. The polypeptide is Cytidine deaminase (Aeromonas hydrophila subsp. hydrophila (strain ATCC 7966 / DSM 30187 / BCRC 13018 / CCUG 14551 / JCM 1027 / KCTC 2358 / NCIMB 9240 / NCTC 8049)).